Consider the following 642-residue polypeptide: Bifunctional protein glk (642 aa).

A glucokinase region spans residues 1–340 (MSTGAQSKAA…QLSNRSGGAS (340 aa)). An ATP-binding site is contributed by 23–28 (ADVGGT). An HTH rpiR-type domain is found at 341 to 417 (SAVFERIRQM…LKLATGLTGT (77 aa)). The tract at residues 341–642 (SAVFERIRQM…SPAAKDVARD (302 aa)) is putative HTH-type transcriptional regulator. Positions 377–396 (IVDIARKADVSQPTVIRFCR) form a DNA-binding region, H-T-H motif. The SIS domain maps to 461-600 (AIEILNGARR…AVGVAIRRAS (140 aa)). A helical transmembrane segment spans residues 576–596 (SMISRILHLLMIDILAVGVAI).

It in the N-terminal section; belongs to the bacterial glucokinase family.

The protein resides in the membrane. It carries out the reaction D-glucose + ATP = D-glucose 6-phosphate + ADP + H(+). This Burkholderia lata (strain ATCC 17760 / DSM 23089 / LMG 22485 / NCIMB 9086 / R18194 / 383) protein is Bifunctional protein glk (glk).